A 309-amino-acid chain; its full sequence is Methionyl-tRNA formyltransferase (309 aa).

A (6S)-5,6,7,8-tetrahydrofolate-binding site is contributed by 109-112; that stretch reads SLLP.

Belongs to the Fmt family.

It carries out the reaction L-methionyl-tRNA(fMet) + (6R)-10-formyltetrahydrofolate = N-formyl-L-methionyl-tRNA(fMet) + (6S)-5,6,7,8-tetrahydrofolate + H(+). In terms of biological role, attaches a formyl group to the free amino group of methionyl-tRNA(fMet). The formyl group appears to play a dual role in the initiator identity of N-formylmethionyl-tRNA by promoting its recognition by IF2 and preventing the misappropriation of this tRNA by the elongation apparatus. In Thiobacillus denitrificans (strain ATCC 25259 / T1), this protein is Methionyl-tRNA formyltransferase.